Here is a 118-residue protein sequence, read N- to C-terminus: Large ribosomal subunit protein bL17 (118 aa).

Belongs to the bacterial ribosomal protein bL17 family. Part of the 50S ribosomal subunit. Contacts protein L32.

The polypeptide is Large ribosomal subunit protein bL17 (Campylobacter concisus (strain 13826)).